We begin with the raw amino-acid sequence, 666 residues long: Phosphoenolpyruvate carboxykinase (ATP) (666 aa).

Disordered stretches follow at residues 1–68 (MATP…AHSP) and 91–132 (ASLT…HPAA). The span at 48 to 58 (APTTPNRSAPT) shows a compositional bias: polar residues. The span at 109–123 (KGEAAAQGAPSTPRA) shows a compositional bias: low complexity. 364–371 (GLSGTGKT) is an ATP binding site.

It belongs to the phosphoenolpyruvate carboxykinase (ATP) family.

Its subcellular location is the cytoplasm. It catalyses the reaction oxaloacetate + ATP = phosphoenolpyruvate + ADP + CO2. It functions in the pathway carbohydrate biosynthesis; gluconeogenesis. The sequence is that of Phosphoenolpyruvate carboxykinase (ATP) from Zea mays (Maize).